Here is a 333-residue protein sequence, read N- to C-terminus: MRSVSGQVVCVTGAGGFIASWLVKILLEKGYTVRGTVRNPDDPKNGHLRELEGAKERLTLCKADLLDYQSLREAINGCDGVFHTASPVTDDPEQMVEPAVIGTKNVINAAAEANVRRVVFTSSIGAVYMDPNRDPETVVDETCWSDPDFCKNTKNWYCYGKMVAEQAAWEEAKEKGVDLVVINPVLVQGPLLQTTVNASVLHILKYLTGSAKTYANSVQAYVDVKDVALAHILLYETPEASGRYLCAESVLHRGDVVEILSKFFPEYPIPTKCSDVTKPRVKPYKFSNQKLKDLGLEFTPVKQCLYETVKSLQEKGHLPIPTQKDEPIIRIQP.

NADP(+) is bound by residues 13–19, arginine 38, lysine 44, 64–65, 84–86, tyrosine 157, lysine 161, 184–187, and serine 199; these read GAGGFIA, DL, TAS, and PVLV. Cysteines 150 and 158 form a disulfide. Catalysis depends on lysine 161, which acts as the Proton donor.

Belongs to the NAD(P)-dependent epimerase/dehydratase family. Dihydroflavonol-4-reductase subfamily. The formation of a reversible disulfide bond reduces activity by perturbing the positioning of nearby catalytic residues. In terms of tissue distribution, expressed in flowers, leaves and stems.

It is found in the cytoplasm. It carries out the reaction (E)-coniferaldehyde + NADP(+) + CoA = (E)-feruloyl-CoA + NADPH + H(+). The catalysed reaction is (E)-4-coumaraldehyde + NADP(+) + CoA = (E)-4-coumaroyl-CoA + NADPH + H(+). The enzyme catalyses (E)-sinapaldehyde + NADP(+) + CoA = (E)-sinapoyl-CoA + NADPH + H(+). It catalyses the reaction (E)-cinnamaldehyde + NADP(+) + CoA = (E)-cinnamoyl-CoA + NADPH + H(+). The protein operates within aromatic compound metabolism; phenylpropanoid biosynthesis. With respect to regulation, inhibited by sodium iodide-mediated oxidation. Involved in the latter stages of lignin biosynthesis. Catalyzes one of the last steps of monolignol biosynthesis, the conversion of cinnamoyl-CoAs into their corresponding cinnamaldehydes. Mediates the conversion of feruloyl CoA to coniferylaldehyde. Also active toward p-coumaroyl-CoA and sinapoyl-CoA. Involved in the production of floral volatile phenylpropanoids in flowers of fragrant cultivars (e.g. cv. Mitchell and cv. V26) from cinnamic acid, a common precursor with the anthocyanin biosynthesis pathway involved in flower pigmentation. The chain is Cinnamoyl-CoA reductase 1 from Petunia hybrida (Petunia).